A 124-amino-acid chain; its full sequence is Small ribosomal subunit protein uS12 (124 aa).

D89 is modified (3-methylthioaspartic acid). The segment at 104 to 124 (TAGVKDRRQSRSKYGAKTPKE) is disordered.

It belongs to the universal ribosomal protein uS12 family. Part of the 30S ribosomal subunit. Contacts proteins S8 and S17. May interact with IF1 in the 30S initiation complex.

Its function is as follows. With S4 and S5 plays an important role in translational accuracy. Functionally, interacts with and stabilizes bases of the 16S rRNA that are involved in tRNA selection in the A site and with the mRNA backbone. Located at the interface of the 30S and 50S subunits, it traverses the body of the 30S subunit contacting proteins on the other side and probably holding the rRNA structure together. The combined cluster of proteins S8, S12 and S17 appears to hold together the shoulder and platform of the 30S subunit. This Parasynechococcus marenigrum (strain WH8102) protein is Small ribosomal subunit protein uS12.